A 481-amino-acid chain; its full sequence is Glutamyl-tRNA(Gln) amidotransferase subunit A (481 aa).

Residues K76 and S151 each act as charge relay system in the active site. Residue S175 is the Acyl-ester intermediate of the active site.

The protein belongs to the amidase family. GatA subfamily. As to quaternary structure, heterotrimer of A, B and C subunits.

It carries out the reaction L-glutamyl-tRNA(Gln) + L-glutamine + ATP + H2O = L-glutaminyl-tRNA(Gln) + L-glutamate + ADP + phosphate + H(+). Allows the formation of correctly charged Gln-tRNA(Gln) through the transamidation of misacylated Glu-tRNA(Gln) in organisms which lack glutaminyl-tRNA synthetase. The reaction takes place in the presence of glutamine and ATP through an activated gamma-phospho-Glu-tRNA(Gln). The protein is Glutamyl-tRNA(Gln) amidotransferase subunit A of Neisseria meningitidis serogroup C (strain 053442).